Consider the following 346-residue polypeptide: Phosphoribosylformylglycinamidine cyclo-ligase (346 aa).

It belongs to the AIR synthase family.

The protein localises to the cytoplasm. The enzyme catalyses 2-formamido-N(1)-(5-O-phospho-beta-D-ribosyl)acetamidine + ATP = 5-amino-1-(5-phospho-beta-D-ribosyl)imidazole + ADP + phosphate + H(+). The protein operates within purine metabolism; IMP biosynthesis via de novo pathway; 5-amino-1-(5-phospho-D-ribosyl)imidazole from N(2)-formyl-N(1)-(5-phospho-D-ribosyl)glycinamide: step 2/2. The sequence is that of Phosphoribosylformylglycinamidine cyclo-ligase from Brevibacillus brevis (strain 47 / JCM 6285 / NBRC 100599).